Here is a 799-residue protein sequence, read N- to C-terminus: Pentatricopeptide repeat-containing protein At2g26790, mitochondrial (799 aa).

A mitochondrion-targeting transit peptide spans 1–27 (MRFSPTFFLLSQLRLTRRRAATSSRFY). PPR repeat units follow at residues 145-179 (LIRV…DCVV), 180-214 (DIKA…GLCA), 215-250 (NEYT…GYKT), 251-278 (FING…KYLA), 282-316 (LRAV…GFGL), 317-351 (DVYA…GLKV), 352-386 (NCVI…NIFL), 387-421 (DRVC…GIVP), 422-456 (DVIN…GMSP), 457-491 (DLIT…GPKP), 492-522 (NAVT…LEQK), 523-553 (CPEN…LEYP), 555-589 (RKSV…RVEP), 590-624 (GRSM…GLIP), 625-659 (DLFT…GIKP), 660-695 (DVVT…KASE), 708-742 (DVVC…GLEP), and 743-777 (DMVA…YNIP).

Belongs to the PPR family. P subfamily.

Its subcellular location is the mitochondrion. This Arabidopsis thaliana (Mouse-ear cress) protein is Pentatricopeptide repeat-containing protein At2g26790, mitochondrial.